The chain runs to 461 residues: UDP-glycosyltransferase 88B1 (461 aa).

Residues Ser278, 340-341 (WA), 358-366 (HCGWNSSLE), and 380-383 (YAEQ) contribute to the UDP-alpha-D-glucose site.

It belongs to the UDP-glycosyltransferase family.

May glycosylate diterpenes or flavonols in leaves. This is UDP-glycosyltransferase 88B1 from Stevia rebaudiana (Stevia).